We begin with the raw amino-acid sequence, 610 residues long: Glucoamylase ARB_02327-1 (610 aa).

The signal sequence occupies residues 1-18; the sequence is MRVTSLLWSSLVIPAAVG. Residues 19-24 constitute a propeptide that is removed on maturation; it reads FQVRFK. Asn49 carries an N-linked (GlcNAc...) asparagine glycan. Trp143 contributes to the substrate binding site. Asn194 is a glycosylation site (N-linked (GlcNAc...) asparagine). Asp199 (proton acceptor) is an active-site residue. Glu202 serves as the catalytic Proton donor. 3 disulfide bridges follow: Cys233-Cys236, Cys245-Cys472, and Cys285-Cys293. A CBM20 domain is found at 504–610; it reads TALPTKNNVR…SGAIKRDTWR (107 aa).

It belongs to the glycosyl hydrolase 15 family.

Its subcellular location is the secreted. It carries out the reaction Hydrolysis of terminal (1-&gt;4)-linked alpha-D-glucose residues successively from non-reducing ends of the chains with release of beta-D-glucose.. This Arthroderma benhamiae (strain ATCC MYA-4681 / CBS 112371) (Trichophyton mentagrophytes) protein is Glucoamylase ARB_02327-1.